The sequence spans 246 residues: FAD synthetase (246 aa).

This sequence belongs to the RibF family.

It catalyses the reaction FMN + ATP + H(+) = FAD + diphosphate. The protein operates within cofactor biosynthesis; FAD biosynthesis; FAD from FMN: step 1/1. Its function is as follows. Catalyzes the adenylation of flavin mononucleotide (FMN) to form flavin adenine dinucleotide (FAD) coenzyme. Can also catalyze, with lower efficiency, the adenylation of the toxic riboflavin analogs 8-demethyl-8-aminoriboflavin mononucleotide (AFMN) and roseoflavin mononucleotide (RoFMN) to 8-demethyl-8-aminoriboflavin adenine dinucleotide (AFAD) and roseoflavin adenine dinucleotide (RoFAD), respectively. This Listeria monocytogenes serovar 1/2a (strain ATCC BAA-679 / EGD-e) protein is FAD synthetase.